Reading from the N-terminus, the 281-residue chain is 2-dehydro-3-deoxyphosphooctonate aldolase (281 aa).

The protein belongs to the KdsA family.

It localises to the cytoplasm. The enzyme catalyses D-arabinose 5-phosphate + phosphoenolpyruvate + H2O = 3-deoxy-alpha-D-manno-2-octulosonate-8-phosphate + phosphate. The protein operates within carbohydrate biosynthesis; 3-deoxy-D-manno-octulosonate biosynthesis; 3-deoxy-D-manno-octulosonate from D-ribulose 5-phosphate: step 2/3. Its pathway is bacterial outer membrane biogenesis; lipopolysaccharide biosynthesis. The polypeptide is 2-dehydro-3-deoxyphosphooctonate aldolase (Psychromonas ingrahamii (strain DSM 17664 / CCUG 51855 / 37)).